A 1093-amino-acid chain; its full sequence is Fused isobutyryl-CoA mutase (1093 aa).

The tract at residues M1–G20 is disordered. The region spanning K26–R156 is the B12-binding domain. Residue H39 coordinates adenosylcob(III)alamin. Residues L169 to A417 are GTPase chaperone MeaI. G219 to S224 provides a ligand contact to GTP. Residues S223, I248, D249, and D262 each coordinate Mg(2+). Residue R265 coordinates GTP. Mg(2+) contacts are provided by E310 and T311. N357 to D360 is a binding site for GTP. Residues R418 to P579 are linker. F587, R622, R728, Y772, S821, R856, and K861 together coordinate substrate. Residues E973 and N1092 each coordinate GTP.

Belongs to the IcmF family. As to quaternary structure, homodimer. The cofactor is adenosylcob(III)alamin. It depends on Mg(2+) as a cofactor.

It carries out the reaction 2-methylpropanoyl-CoA = butanoyl-CoA. It catalyses the reaction 3-methylbutanoyl-CoA = 2,2-dimethylpropanoyl-CoA. The enzyme catalyses GTP + H2O = GDP + phosphate + H(+). With respect to regulation, is prone to inactivation during catalytic turnover due to the occasional loss of the 5'-deoxyadenosine moiety and formation of the inactive cob(II)alamin cofactor in its active site. The GTPase activity of IcmF powers the ejection of the inactive cofactor and requires the presence of an acceptor protein, adenosyltransferase (ATR), for receiving it. ATR, in turn, catalyzes an adenosylation reaction converting cob(II)alamin in the presence of ATP and a reductant to the active AdoCbl cofactor. The repaired cofactor is then reloaded onto IcmF in a GTPase-gated step, regenerating active enzyme. The GTPase activity of IcmF is significantly decreased in the presence of excess of AdoCbl or cob(II)alamin and is higher in the apoenzyme state, indicating that the G-domain senses the presence and identity of the cofactor in the mutase active site. Catalyzes the reversible interconversion of isobutyryl-CoA and n-butyryl-CoA, and to a much lesser extent, of pivalyl-CoA and isovaleryl-CoA, using radical chemistry. Also exhibits GTPase activity, associated with its G-protein domain (MeaI) that functions as a chaperone that assists cofactor delivery and proper holo-enzyme assembly. The G-domain of IcmF also has a role in its cofactor repair. Does not display ATPase activity. The sequence is that of Fused isobutyryl-CoA mutase from Cupriavidus metallidurans (strain ATCC 43123 / DSM 2839 / NBRC 102507 / CH34) (Ralstonia metallidurans).